Here is a 489-residue protein sequence, read N- to C-terminus: WPP domain-interacting protein 1 (489 aa).

A disordered region spans residues 49–73 (SNSVELGKPMSFDSPGDGGGAYSPV). Short sequence motifs (nuclear localization signal) lie at residues 80-81 (RK), 83-84 (RR), and 104-105 (KR). Positions 195-264 (PMISSGQGGN…DDAGGEGGES (70 aa)) are disordered. The segment covering 215-224 (GESVDFEKEN) has biased composition (basic and acidic residues). Residues 323–446 (EIVTLVNNVE…QDLQNDCIEI (124 aa)) are a coiled coil. A KASH domain is found at 459–489 (SYVLIQLVLLSTVVLLLLSQLLPEPDTVVPT). Residues 460–480 (YVLIQLVLLSTVVLLLLSQLL) traverse the membrane as a helical segment.

As to quaternary structure, homodimer and heterodimer with WIP2. Component of Ran complexes at least composed of WIT1 or WIT2, RANGAP1 or RANGAP2, and WIP1 or WIP2 or WIP3. Interacts with RANGAP1, RANGAP2, WPP1/MAF1, and WPP2/MAF2. Interacts with SUN1 and SUN2. Interacts with KIN1. Core component of the LINC complex which is composed of inner nuclear membrane SUN domain-containing proteins coupled to outer nuclear membrane WIP and WIT proteins. The LINC complex also involves nucleoskeletal proteins CRWN/LINC and possibly KAKU4 and the cytoskeletal myosin KAKU1. Interacts with WIT1 and SUN2. Interacts with WIT2. Interacts with SUN3. Expressed in seedlings, roots, stems, leaves, and flowers.

Its subcellular location is the nucleus envelope. The protein resides in the nucleus membrane. Functionally, mediates and enhances the nuclear envelope docking of RANGAP proteins mediated by WIT1 and WIT2 in the undifferentiated cells of root tips. As component of the SUN-WIP-WIT2-KAKU1 complex, mediates the transfer of cytoplasmic forces to the nuclear envelope (NE), leading to nuclear shape changes. This Arabidopsis thaliana (Mouse-ear cress) protein is WPP domain-interacting protein 1 (WIP1).